The sequence spans 788 residues: Bifunctional purine biosynthetic protein ADE1 (788 aa).

The GARS stretch occupies residues 1-430; it reads MEPIIALLIG…DIAHHALNPK (430 aa). Positions 115-321 constitute an ATP-grasp domain; it reads KDFMHRNNIP…LAEIILACVN (207 aa). Position 141–202 (141–202) interacts with ATP; sequence LDTCTFDVVI…EELLEGEELS (62 aa). Mg(2+) contacts are provided by glutamate 291 and asparagine 293. The segment at 437–769 is AIRS; sequence LTYENSGVSV…TVYRIGQLVD (333 aa).

It in the N-terminal section; belongs to the GARS family. In the C-terminal section; belongs to the AIR synthase family. It depends on Mg(2+) as a cofactor. The cofactor is Mn(2+).

The protein localises to the cytoplasm. It is found in the cytosol. The enzyme catalyses 5-phospho-beta-D-ribosylamine + glycine + ATP = N(1)-(5-phospho-beta-D-ribosyl)glycinamide + ADP + phosphate + H(+). The catalysed reaction is 2-formamido-N(1)-(5-O-phospho-beta-D-ribosyl)acetamidine + ATP = 5-amino-1-(5-phospho-beta-D-ribosyl)imidazole + ADP + phosphate + H(+). It functions in the pathway purine metabolism; IMP biosynthesis via de novo pathway; 5-amino-1-(5-phospho-D-ribosyl)imidazole from N(2)-formyl-N(1)-(5-phospho-D-ribosyl)glycinamide: step 2/2. The protein operates within purine metabolism; IMP biosynthesis via de novo pathway; N(1)-(5-phospho-D-ribosyl)glycinamide from 5-phospho-alpha-D-ribose 1-diphosphate: step 2/2. Its function is as follows. Catalyzes the second and fifth step in the 'de novo' purine biosynthesis pathway; contains phosphoribosylamine--glycine ligase (GARS) and phosphoribosylformylglycinamidine cyclo-ligase (AIRS) activities. In Schizosaccharomyces pombe (strain 972 / ATCC 24843) (Fission yeast), this protein is Bifunctional purine biosynthetic protein ADE1.